Here is a 178-residue protein sequence, read N- to C-terminus: uncharacterized protein (178 aa).

2 helical membrane passes run Ala-6–Leu-26 and Lys-154–Ile-174.

The protein resides in the cell membrane. This is an uncharacterized protein from Methanocaldococcus jannaschii (strain ATCC 43067 / DSM 2661 / JAL-1 / JCM 10045 / NBRC 100440) (Methanococcus jannaschii).